Consider the following 65-residue polypeptide: Adrenergic toxin rho-elapitoxin-Dp1b (65 aa).

Cystine bridges form between Cys3-Cys24, Cys17-Cys42, Cys46-Cys57, and Cys58-Cys63.

The protein belongs to the three-finger toxin family. Short-chain subfamily. Aminergic toxin sub-subfamily. In terms of tissue distribution, expressed by the venom gland.

It localises to the secreted. Its function is as follows. Highly potent on various alpha-adrenoceptors (ADRA) (subnanomolar affinity for ADRA1A). Order of potency is the following: ADRA1A (Ki=0.37 nM) &gt; ADRA1B (Ki=10.47 nM) &gt; ADRA1D (Ki=104.71 nM) &gt; ADRA2C (Ki=165.96 nM). Were also found to reversibly bind to muscarinic acetylcholine receptors (CHRM), but the affinity is much weaker (CHRM1, Ki=1778.28 nM; CHRM4, Ki=4466.84 nM; CHRM2, Ki=17782.79 nM). This Dendroaspis polylepis polylepis (Black mamba) protein is Adrenergic toxin rho-elapitoxin-Dp1b.